The primary structure comprises 370 residues: Erythronate-4-phosphate dehydrogenase (370 aa).

Substrate is bound by residues serine 45 and threonine 66. NAD(+) is bound by residues aspartate 142 and threonine 169. The active site involves arginine 202. Aspartate 228 contributes to the NAD(+) binding site. Glutamate 233 is a catalytic residue. Histidine 250 acts as the Proton donor in catalysis. Glycine 253 contributes to the NAD(+) binding site. Substrate is bound at residue tyrosine 254.

Belongs to the D-isomer specific 2-hydroxyacid dehydrogenase family. PdxB subfamily. Homodimer.

It is found in the cytoplasm. It carries out the reaction 4-phospho-D-erythronate + NAD(+) = (R)-3-hydroxy-2-oxo-4-phosphooxybutanoate + NADH + H(+). It participates in cofactor biosynthesis; pyridoxine 5'-phosphate biosynthesis; pyridoxine 5'-phosphate from D-erythrose 4-phosphate: step 2/5. Its function is as follows. Catalyzes the oxidation of erythronate-4-phosphate to 3-hydroxy-2-oxo-4-phosphonooxybutanoate. This is Erythronate-4-phosphate dehydrogenase from Teredinibacter turnerae (strain ATCC 39867 / T7901).